Consider the following 207-residue polypeptide: Large ribosomal subunit protein uL4 (207 aa).

Residues Gln-44–Ile-78 are disordered. Positions Gly-47–Gly-59 are enriched in basic and acidic residues. Basic residues predominate over residues Gly-60–Gly-71.

Belongs to the universal ribosomal protein uL4 family. In terms of assembly, part of the 50S ribosomal subunit.

One of the primary rRNA binding proteins, this protein initially binds near the 5'-end of the 23S rRNA. It is important during the early stages of 50S assembly. It makes multiple contacts with different domains of the 23S rRNA in the assembled 50S subunit and ribosome. Functionally, forms part of the polypeptide exit tunnel. In Brevibacillus brevis (strain 47 / JCM 6285 / NBRC 100599), this protein is Large ribosomal subunit protein uL4.